Reading from the N-terminus, the 90-residue chain is Small ribosomal subunit protein bS20 (90 aa).

A disordered region spans residues M1–N21.

This sequence belongs to the bacterial ribosomal protein bS20 family.

Binds directly to 16S ribosomal RNA. The sequence is that of Small ribosomal subunit protein bS20 from Nitratiruptor sp. (strain SB155-2).